The primary structure comprises 286 residues: uncharacterized protein (286 aa).

The Radical SAM core domain maps to 36 to 256; it reads ENPQHHPSIE…IKGCLLVQLK (221 aa). 3 residues coordinate [4Fe-4S] cluster: Cys50, Cys54, and Cys57.

Requires [4Fe-4S] cluster as cofactor.

This is an uncharacterized protein from Methanocaldococcus jannaschii (strain ATCC 43067 / DSM 2661 / JAL-1 / JCM 10045 / NBRC 100440) (Methanococcus jannaschii).